The primary structure comprises 158 residues: ATP synthase subunit b', chloroplastic (158 aa).

The chain crosses the membrane as a helical span at residues 21 to 41 (GTLPLMALQFLILMLLLNTIF).

The protein belongs to the ATPase B chain family. F-type ATPases have 2 components, F(1) - the catalytic core - and F(0) - the membrane proton channel. F(1) has five subunits: alpha(3), beta(3), gamma(1), delta(1), epsilon(1). F(0) has four main subunits: a(1), b(1), b'(1) and c(10-14). The alpha and beta chains form an alternating ring which encloses part of the gamma chain. F(1) is attached to F(0) by a central stalk formed by the gamma and epsilon chains, while a peripheral stalk is formed by the delta, b and b' chains.

It localises to the plastid. Its subcellular location is the chloroplast thylakoid membrane. Functionally, f(1)F(0) ATP synthase produces ATP from ADP in the presence of a proton or sodium gradient. F-type ATPases consist of two structural domains, F(1) containing the extramembraneous catalytic core and F(0) containing the membrane proton channel, linked together by a central stalk and a peripheral stalk. During catalysis, ATP synthesis in the catalytic domain of F(1) is coupled via a rotary mechanism of the central stalk subunits to proton translocation. In terms of biological role, component of the F(0) channel, it forms part of the peripheral stalk, linking F(1) to F(0). The b'-subunit is a diverged and duplicated form of b found in plants and photosynthetic bacteria. This chain is ATP synthase subunit b', chloroplastic, found in Porphyra purpurea (Red seaweed).